Reading from the N-terminus, the 538-residue chain is Putative outer membrane porin BglH (538 aa).

Residues 1 to 25 form the signal peptide; that stretch reads MFRRNIITSAILLMAPLAFSAQSLA.

The protein belongs to the porin LamB (TC 1.B.3) family.

It localises to the cell outer membrane. May be a sugar porin with a broad carbohydrate specificity. The protein is Putative outer membrane porin BglH (bglH) of Escherichia coli (strain UTI89 / UPEC).